Here is a 59-residue protein sequence, read N- to C-terminus: Large ribosomal subunit protein uL30 (59 aa).

The protein belongs to the universal ribosomal protein uL30 family. As to quaternary structure, part of the 50S ribosomal subunit.

This chain is Large ribosomal subunit protein uL30, found in Brachyspira hyodysenteriae (strain ATCC 49526 / WA1).